We begin with the raw amino-acid sequence, 338 residues long: MADQAPFDTDVNTLTRFVMEEGRKARGTGELTQLLNSLCTAVKAISSAVRKAGIAHLYGIAGSTNVTGDQVKKLDVLSNDLVMNMLKSSFATCVLVSEEDKHAIIVEPEKRGKYVVCFDPLDGSSNIDCLVSVGTIFGIYRKKSTDEPSEKDALQPGRNLVAAGYALYGSATMLVLAMDCGVNCFMLDPAIGEFILVDKDVKIKKKGKIYSLNEGYARDFDPAVTEYIQRKKFPPDNSAPYGARYVGSMVADVHRTLVYGGIFLYPANKKSPNGKLRLLYECNPMAYVMEKAGGMATTGKEAVLDVIPTDIHQRAPVILGSPDDVLEFLKVYEKHSAQ.

An N-acetylalanine modification is found at Ala2. Residues 18–22 and 28–32 contribute to the AMP site; these read VMEEG and TGELT. Residues Asp69 and Glu98 each coordinate Mg(2+). 113 to 114 provides a ligand contact to AMP; that stretch reads KY. Positions 119, 121, and 122 each coordinate Mg(2+). 122–125 serves as a coordination point for substrate; sequence DGSS. Arg141 contributes to the AMP binding site. Lys151 bears the N6-succinyllysine mark. Residues 213-216, 244-249, Tyr265, and 275-277 each bind substrate; these read NEGY, RYVGSM, and KLR. 3 positions are modified to phosphotyrosine: Tyr216, Tyr245, and Tyr265. Glu281 lines the Mg(2+) pocket.

This sequence belongs to the FBPase class 1 family. In terms of assembly, homotetramer. Requires Mg(2+) as cofactor. In terms of tissue distribution, expressed in pancreatic islets.

The catalysed reaction is beta-D-fructose 1,6-bisphosphate + H2O = beta-D-fructose 6-phosphate + phosphate. It participates in carbohydrate biosynthesis; gluconeogenesis. Its activity is regulated as follows. Subject to complex allosteric regulation. The enzyme can assume an active R-state, or an inactive T-state. Intermediate conformations may exist. AMP acts as an allosteric inhibitor. AMP binding affects the turnover of bound substrate and not the affinity for substrate. Fructose 2,6-bisphosphate acts as a competitive inhibitor. Fructose 2,6-bisphosphate and AMP have synergistic effects. Catalyzes the hydrolysis of fructose 1,6-bisphosphate to fructose 6-phosphate in the presence of divalent cations, acting as a rate-limiting enzyme in gluconeogenesis. Plays a role in regulating glucose sensing and insulin secretion of pancreatic beta-cells. Appears to modulate glycerol gluconeogenesis in liver. Important regulator of appetite and adiposity; increased expression of the protein in liver after nutrient excess increases circulating satiety hormones and reduces appetite-stimulating neuropeptides and thus seems to provide a feedback mechanism to limit weight gain. In Homo sapiens (Human), this protein is Fructose-1,6-bisphosphatase 1 (FBP1).